A 100-amino-acid chain; its full sequence is MDLSPREKDKLLIFTAGLVAERRLARGVKLNYPEAMAYISAALLEGARDGQTVAELMHFGTTLLSREQVMEGVPEMIPEIQIEATFPDGTKLVTVHQPIA.

It belongs to the urease gamma subunit family. Heterotrimer of UreA (gamma), UreB (beta) and UreC (alpha) subunits. Three heterotrimers associate to form the active enzyme.

Its subcellular location is the cytoplasm. It carries out the reaction urea + 2 H2O + H(+) = hydrogencarbonate + 2 NH4(+). It functions in the pathway nitrogen metabolism; urea degradation; CO(2) and NH(3) from urea (urease route): step 1/1. The polypeptide is Urease subunit gamma (Ectopseudomonas mendocina (strain ymp) (Pseudomonas mendocina)).